Reading from the N-terminus, the 124-residue chain is Small ribosomal subunit protein uS12 (124 aa).

The interval 1-25 is disordered; sequence MPTINQLIRKPRKSQKEKTASPALQ. Asp89 is subject to 3-methylthioaspartic acid.

The protein belongs to the universal ribosomal protein uS12 family. Part of the 30S ribosomal subunit. Contacts proteins S8 and S17. May interact with IF1 in the 30S initiation complex.

Its function is as follows. With S4 and S5 plays an important role in translational accuracy. Functionally, interacts with and stabilizes bases of the 16S rRNA that are involved in tRNA selection in the A site and with the mRNA backbone. Located at the interface of the 30S and 50S subunits, it traverses the body of the 30S subunit contacting proteins on the other side and probably holding the rRNA structure together. The combined cluster of proteins S8, S12 and S17 appears to hold together the shoulder and platform of the 30S subunit. The sequence is that of Small ribosomal subunit protein uS12 from Borrelia duttonii (strain Ly).